A 599-amino-acid chain; its full sequence is Kelch repeat and BTB domain-containing protein 8 (599 aa).

The tract at residues 1-25 (MAASADLSKSSPTPNGIPSSDTAND) is disordered. Residues 7 to 25 (LSKSSPTPNGIPSSDTAND) show a composition bias toward polar residues. The region spanning 49-117 (TDIVVEVDHG…AYTSRVILTE (69 aa)) is the BTB domain. Positions 152 to 254 (SIGVFIFADH…MEDTFIEKIP (103 aa)) constitute a BACK domain. 5 Kelch repeats span residues 334 to 388 (DIYI…YCCG), 389 to 439 (KMYA…EHKE), 441 to 479 (IYVL…VYKD), 481 to 530 (IYYI…LFQN), and 540 to 586 (QVTV…FECA).

The protein belongs to the KBTBD8 family. Component of the BCR(KBTBD8) E3 ubiquitin ligase complex, at least composed of CUL3, KBTBD8 and RBX1.

Its subcellular location is the cytoplasm. The protein localises to the cytoskeleton. The protein resides in the spindle. It localises to the golgi apparatus. Its function is as follows. Substrate-specific adapter of a BCR (BTB-CUL3-RBX1) E3 ubiquitin ligase complex that acts as a regulator of neural crest specification. The BCR(KBTBD8) complex acts by mediating monoubiquitination of NOLC1 and TCOF1: monoubiquitination promotes the formation of a NOLC1-TCOF1 complex that acts as a platform to connect RNA polymerase I with enzymes responsible for ribosomal processing and modification, leading to remodel the translational program of differentiating cells in favor of neural crest specification. The chain is Kelch repeat and BTB domain-containing protein 8 (Kbtbd8) from Mus musculus (Mouse).